Consider the following 212-residue polypeptide: Protein-L-isoaspartate O-methyltransferase (212 aa).

Residue serine 62 is part of the active site.

The protein belongs to the methyltransferase superfamily. L-isoaspartyl/D-aspartyl protein methyltransferase family.

It localises to the cytoplasm. The catalysed reaction is [protein]-L-isoaspartate + S-adenosyl-L-methionine = [protein]-L-isoaspartate alpha-methyl ester + S-adenosyl-L-homocysteine. In terms of biological role, catalyzes the methyl esterification of L-isoaspartyl residues in peptides and proteins that result from spontaneous decomposition of normal L-aspartyl and L-asparaginyl residues. It plays a role in the repair and/or degradation of damaged proteins. The chain is Protein-L-isoaspartate O-methyltransferase from Pseudoalteromonas translucida (strain TAC 125).